We begin with the raw amino-acid sequence, 255 residues long: Triosephosphate isomerase (255 aa).

15 to 17 (NWK) provides a ligand contact to substrate. The active-site Electrophile is His-100. Glu-172 serves as the catalytic Proton acceptor. Substrate-binding positions include Gly-178, Ser-218, and 239 to 240 (GG).

Belongs to the triosephosphate isomerase family. As to quaternary structure, homodimer.

The protein localises to the cytoplasm. It carries out the reaction D-glyceraldehyde 3-phosphate = dihydroxyacetone phosphate. The protein operates within carbohydrate biosynthesis; gluconeogenesis. It participates in carbohydrate degradation; glycolysis; D-glyceraldehyde 3-phosphate from glycerone phosphate: step 1/1. Functionally, involved in the gluconeogenesis. Catalyzes stereospecifically the conversion of dihydroxyacetone phosphate (DHAP) to D-glyceraldehyde-3-phosphate (G3P). The chain is Triosephosphate isomerase from Clostridium tetani (strain Massachusetts / E88).